A 287-amino-acid chain; its full sequence is Undecaprenyl-diphosphatase (287 aa).

Transmembrane regions (helical) follow at residues 50–70, 97–117, 131–151, 160–180, 206–226, 234–254, and 264–284; these read PGVSVTAAIQLGSIAAVIAYF, LGFAMVVGTLPILVIGLGIKF, IPSIAIVSIVMALLLALAEQV, VVLGRDGLLVGLAQALALLPG, FLLGIPGITIAGLVELKDALA, LPLLVGIGSAAVVSWLAIDWL, and WLFVAYRLVFGLLLLVWWGVY.

It belongs to the UppP family.

The protein resides in the cell inner membrane. The catalysed reaction is di-trans,octa-cis-undecaprenyl diphosphate + H2O = di-trans,octa-cis-undecaprenyl phosphate + phosphate + H(+). Catalyzes the dephosphorylation of undecaprenyl diphosphate (UPP). Confers resistance to bacitracin. This chain is Undecaprenyl-diphosphatase, found in Synechococcus sp. (strain CC9605).